The primary structure comprises 171 residues: Shikimate kinase (171 aa).

Residue 13 to 18 (GVGKST) participates in ATP binding. S17 is a binding site for Mg(2+). Substrate is bound by residues D35, R59, and G81. R118 is an ATP binding site. R136 provides a ligand contact to substrate. ATP is bound at residue R153.

This sequence belongs to the shikimate kinase family. In terms of assembly, monomer. It depends on Mg(2+) as a cofactor.

Its subcellular location is the cytoplasm. The catalysed reaction is shikimate + ATP = 3-phosphoshikimate + ADP + H(+). It functions in the pathway metabolic intermediate biosynthesis; chorismate biosynthesis; chorismate from D-erythrose 4-phosphate and phosphoenolpyruvate: step 5/7. Catalyzes the specific phosphorylation of the 3-hydroxyl group of shikimic acid using ATP as a cosubstrate. The polypeptide is Shikimate kinase (Streptomyces coelicolor (strain ATCC BAA-471 / A3(2) / M145)).